Here is a 393-residue protein sequence, read N- to C-terminus: Interleukin-1 receptor type 2 (393 aa).

An N-terminal signal peptide occupies residues 1–13; the sequence is MFRLYVLVMGVSA. The Extracellular portion of the chain corresponds to 14–347; that stretch reads FTLQPAAHTG…RTTVKEPPPT (334 aa). 3 disulfide bridges follow: C28/C116, C50/C108, and C152/C207. Ig-like C2-type domains lie at 29 to 120, 134 to 221, and 237 to 342; these read PVRG…DKVS, PFIS…YNIT, and PVII…TTVK. Residues N66, N72, and N112 are each glycosylated (N-linked (GlcNAc...) asparagine). 2 N-linked (GlcNAc...) asparagine glycosylation sites follow: N219 and N277. A disulfide bridge links C258 with C326. Residues 348-368 form a helical membrane-spanning segment; that stretch reads FSWGIVLAPLALAFLVLGGIW. Topologically, residues 369–393 are cytoplasmic; it reads MHRRCKHRTGKADGLTVLRPHHQDF.

Belongs to the interleukin-1 receptor family. As to quaternary structure, forms a non-signaling receptor complex consisting of IL1R2 and IL1RAP. In terms of processing, a soluble form (sIL1R2) can also be produced by proteolytic cleavage at the cell surface (shedding) involving a metalloproteinase.

The protein resides in the secreted. It localises to the cell membrane. Its function is as follows. Non-signaling receptor for IL1A, IL1B and IL1RN. Reduces IL1B activities. Serves as a decoy receptor by competitive binding to IL1B and preventing its binding to IL1R1. Also modulates cellular response through non-signaling association with IL1RAP after binding to IL1B. IL1R2 (membrane and secreted forms) preferentially binds IL1B and poorly IL1A and IL1RN. The secreted IL1R2 recruits secreted IL1RAP with high affinity; this complex formation may be the dominant mechanism for neutralization of IL1B by secreted/soluble receptors. The chain is Interleukin-1 receptor type 2 (IL1R2) from Chlorocebus aethiops (Green monkey).